A 146-amino-acid chain; its full sequence is MKKVLLVNGPNLNRLGVREVNVYGKGTLATLEADMKQEAEAMGVELECFQSNHEGAIIDRIHEAEDIYEGIILNPGAFTHYSYAIRDAIASISIPVIEVHISNIHQRESFRHESVTAAVCAGQIVGFGFYGYKLALFALMEKLREA.

Y23 (proton acceptor) is an active-site residue. Positions 74, 80, and 87 each coordinate substrate. H100 (proton donor) is an active-site residue. Substrate contacts are provided by residues 101–102 and R111; that span reads IS.

The protein belongs to the type-II 3-dehydroquinase family. In terms of assembly, homododecamer.

It catalyses the reaction 3-dehydroquinate = 3-dehydroshikimate + H2O. It participates in metabolic intermediate biosynthesis; chorismate biosynthesis; chorismate from D-erythrose 4-phosphate and phosphoenolpyruvate: step 3/7. In terms of biological role, catalyzes a trans-dehydration via an enolate intermediate. The chain is 3-dehydroquinate dehydratase from Bacillus cereus (strain AH820).